The following is a 237-amino-acid chain: 1-(5-phosphoribosyl)-5-[(5-phosphoribosylamino)methylideneamino] imidazole-4-carboxamide isomerase (237 aa).

The active-site Proton acceptor is the D8. Residue D130 is the Proton donor of the active site.

This sequence belongs to the HisA/HisF family.

Its subcellular location is the cytoplasm. The catalysed reaction is 1-(5-phospho-beta-D-ribosyl)-5-[(5-phospho-beta-D-ribosylamino)methylideneamino]imidazole-4-carboxamide = 5-[(5-phospho-1-deoxy-D-ribulos-1-ylimino)methylamino]-1-(5-phospho-beta-D-ribosyl)imidazole-4-carboxamide. The protein operates within amino-acid biosynthesis; L-histidine biosynthesis; L-histidine from 5-phospho-alpha-D-ribose 1-diphosphate: step 4/9. The protein is 1-(5-phosphoribosyl)-5-[(5-phosphoribosylamino)methylideneamino] imidazole-4-carboxamide isomerase of Halothermothrix orenii (strain H 168 / OCM 544 / DSM 9562).